Consider the following 1297-residue polypeptide: Cingulin-like protein 1 (1297 aa).

A head region spans residues 1–550 (MELYFGEYQH…ELTQQTNEET (550 aa)). Residues 37–51 (AGSYGVSIRVQGIDG) carry the ZIM motif. A phosphoserine mark is found at serine 113, serine 203, and serine 257. Disordered regions lie at residues 161–208 (NEVN…TSED), 245–306 (GVGE…TPTS), 364–396 (KPGL…AFPF), and 428–467 (QRSV…DGKV). Residues 197–206 (YGSQPNSPTS) are compositionally biased toward polar residues. The span at 268 to 283 (ETKKNRPDVLPFRRQD) shows a compositional bias: basic and acidic residues. 3 positions are modified to phosphoserine: serine 284, serine 298, and serine 299. Low complexity predominate over residues 297–306 (SSSSSTTPTS). The segment covering 367-378 (LQRRGRSGKRNR) has biased composition (basic residues). Over residues 379 to 389 (INPDDRKRSRS) the composition is skewed to basic and acidic residues. Serine 389 and serine 392 each carry phosphoserine. Position 482 is a phosphoserine (serine 482). The segment at 586–608 (SRAAGSAQGSNQAPNSPSEGNSL) is disordered. Positions 592 to 608 (AQGSNQAPNSPSEGNSL) are enriched in polar residues. Positions 604 to 1251 (EGNSLLDQKN…LQGQLNSLKK (648 aa)) form a coiled coil. Phosphoserine occurs at positions 678 and 704. A tail region spans residues 1259 to 1297 (SSKVLDDSDDDDLSSDAGSLYEAPLSYAFPKDSTIASQI).

Belongs to the cingulin family. As to quaternary structure, homodimer or oligomer. Interacts with CD2AP and SH3BP1; probably part of a complex at cell junctions. Widely expressed. Highly expressed in the kidney and lung.

It localises to the cell junction. It is found in the tight junction. Functionally, may be involved in anchoring the apical junctional complex, especially tight junctions, to actin-based cytoskeletons. This chain is Cingulin-like protein 1, found in Mus musculus (Mouse).